The chain runs to 441 residues: Ribosomal protein uS12 methylthiotransferase RimO (441 aa).

The MTTase N-terminal domain maps to 8–118; that stretch reads PKIGFVSLGC…VLQHVHHYVP (111 aa). Residues C17, C53, C82, C150, C154, and C157 each contribute to the [4Fe-4S] cluster site. Residues 136–373 enclose the Radical SAM core domain; sequence LTPRHYAYLK…MQLQQQISAE (238 aa). Positions 376–441 constitute a TRAM domain; that stretch reads QEKVGREILV…DEYDLWGSRV (66 aa).

Belongs to the methylthiotransferase family. RimO subfamily. [4Fe-4S] cluster serves as cofactor.

It is found in the cytoplasm. It carries out the reaction L-aspartate(89)-[ribosomal protein uS12]-hydrogen + (sulfur carrier)-SH + AH2 + 2 S-adenosyl-L-methionine = 3-methylsulfanyl-L-aspartate(89)-[ribosomal protein uS12]-hydrogen + (sulfur carrier)-H + 5'-deoxyadenosine + L-methionine + A + S-adenosyl-L-homocysteine + 2 H(+). Catalyzes the methylthiolation of an aspartic acid residue of ribosomal protein uS12. The protein is Ribosomal protein uS12 methylthiotransferase RimO of Salmonella agona (strain SL483).